The primary structure comprises 344 residues: MLKVGIVGGTGYTGVELLRLLAQHPQVEVAVITSRSEAGVKVADMYPNLRGHYDGLAFSVPDSAVLGSCDVVFFATPHGVAHALAGELLAAGTRVIDLSADFRLQDAEEWARWYGQPHGAPELLPEAVYGLPEVNRERIRSARLIAVPGCYPTATQLGFLPLLESGLADNARLIADCKSGVSGAGRGAKVGSLFCEASESMMAYAVKGHRHLPEISQGLRRAAGGEVGLTFVPHLTPMIRGIHATLYASVADRSVDLQALYEKRYASEPFVDVMPAGSHPETRSVRGANVCRIAVHRPQGGDLVVVLSVIDNLVKGASGQAVQNMNILFGLDERLGLAHAALLP.

Cys-150 is an active-site residue.

Belongs to the NAGSA dehydrogenase family. Type 1 subfamily.

The protein resides in the cytoplasm. It carries out the reaction N-acetyl-L-glutamate 5-semialdehyde + phosphate + NADP(+) = N-acetyl-L-glutamyl 5-phosphate + NADPH + H(+). It participates in amino-acid biosynthesis; L-arginine biosynthesis; N(2)-acetyl-L-ornithine from L-glutamate: step 3/4. Functionally, catalyzes the NADPH-dependent reduction of N-acetyl-5-glutamyl phosphate to yield N-acetyl-L-glutamate 5-semialdehyde. This chain is N-acetyl-gamma-glutamyl-phosphate reductase, found in Azotobacter vinelandii (strain DJ / ATCC BAA-1303).